Reading from the N-terminus, the 210-residue chain is Uracil phosphoribosyltransferase (210 aa).

Residues Arg80, Arg105, and 132–140 contribute to the 5-phospho-alpha-D-ribose 1-diphosphate site; that span reads DPMLATGGS. Uracil contacts are provided by residues Ile195 and 200–202; that span reads GDA. Asp201 contacts 5-phospho-alpha-D-ribose 1-diphosphate.

Belongs to the UPRTase family. It depends on Mg(2+) as a cofactor.

The catalysed reaction is UMP + diphosphate = 5-phospho-alpha-D-ribose 1-diphosphate + uracil. Its pathway is pyrimidine metabolism; UMP biosynthesis via salvage pathway; UMP from uracil: step 1/1. Allosterically activated by GTP. Its function is as follows. Catalyzes the conversion of uracil and 5-phospho-alpha-D-ribose 1-diphosphate (PRPP) to UMP and diphosphate. This chain is Uracil phosphoribosyltransferase, found in Caldanaerobacter subterraneus subsp. tengcongensis (strain DSM 15242 / JCM 11007 / NBRC 100824 / MB4) (Thermoanaerobacter tengcongensis).